The sequence spans 333 residues: Atrochrysone carboxyl ACP thioesterase (333 aa).

Zn(2+) contacts are provided by His-104, His-106, Asp-108, and His-109. Catalysis depends on Asp-108, which acts as the Proton donor/acceptor.

It belongs to the metallo-beta-lactamase superfamily. The cofactor is Zn(2+).

It carries out the reaction atrochrysone carboxyl-[ACP] + H2O = atrochrysone carboxylate + holo-[ACP] + H(+). It functions in the pathway pigment biosynthesis. Its function is as follows. Atrochrysone carboxyl ACP thioesterase; part of the gene cluster that mediates the biosynthesis of the bianthraquinone cladofulvin, a conidial pigment not required for virulence but that plays a role in fitness and resistance to environmental stresses including UV light and low-temperature stress. The pathway begins with the synthesis of atrochrysone thioester by the polyketide synthase (PKS) claG. The atrochrysone carboxyl ACP thioesterase claF then breaks the thioester bond and releases the atrochrysone carboxylic acid from claG. This compound is decarboxylated by claH to yield emodin, which is further converted to chrysophanol hydroquinone by the reductase claC and the dehydratase claB. The cytochrome P450 monooxygenase claM then catalyzes the dimerization of nataloe-emodin to cladofulvin. The polypeptide is Atrochrysone carboxyl ACP thioesterase (Passalora fulva (Tomato leaf mold)).